We begin with the raw amino-acid sequence, 84 residues long: DNA-directed RNA polymerase subunit Rpo5 (84 aa).

It belongs to the archaeal Rpo5/eukaryotic RPB5 RNA polymerase subunit family. As to quaternary structure, part of the RNA polymerase complex.

The protein resides in the cytoplasm. The enzyme catalyses RNA(n) + a ribonucleoside 5'-triphosphate = RNA(n+1) + diphosphate. In terms of biological role, DNA-dependent RNA polymerase (RNAP) catalyzes the transcription of DNA into RNA using the four ribonucleoside triphosphates as substrates. The chain is DNA-directed RNA polymerase subunit Rpo5 from Saccharolobus islandicus (strain Y.N.15.51 / Yellowstone #2) (Sulfolobus islandicus).